An 81-amino-acid chain; its full sequence is Protein Vpu (81 aa).

Over 1-7 (MQPLVII) the chain is Extracellular. The helical transmembrane segment at 8 to 28 (AIAALVVAIIIAIVVWTIVYI) threads the bilayer. At 29–81 (EYRRIKRQRKIDCLIDRIRERAEDSGNESEGEREELSKLVEMGHHAPWDVDDL) the chain is on the cytoplasmic side. The segment at 50–81 (AEDSGNESEGEREELSKLVEMGHHAPWDVDDL) is disordered. Serine 53 and serine 57 each carry phosphoserine; by host CK2. Residues 62-81 (EELSKLVEMGHHAPWDVDDL) are compositionally biased toward basic and acidic residues.

Belongs to the HIV-1 VPU protein family. As to quaternary structure, homopentamer. Interacts with host CD4 and BRTC; these interactions induce proteasomal degradation of CD4. Interacts with host BST2; this interaction leads to the degradation of host BST2. Interacts with host FBXW11. Interacts with host AP1M1; this interaction plays a role in the mistrafficking and subsequent degradation of host BST2. Interacts with host RANBP2; this interaction allows Vpu to down-regulate host BLM sumoylation. Phosphorylated by host CK2. This phosphorylation is necessary for interaction with human BTRC and degradation of CD4.

The protein resides in the host membrane. Ion channel activity is inhibited by hexamethylene amiloride in vitro. Its function is as follows. Enhances virion budding by targeting host CD4 and Tetherin/BST2 to proteasome degradation. Degradation of CD4 prevents any unwanted premature interactions between viral Env and its host receptor CD4 in the endoplasmic reticulum. Degradation of antiretroviral protein Tetherin/BST2 is important for virion budding, as BST2 tethers new viral particles to the host cell membrane. Mechanistically, Vpu bridges either CD4 or BST2 to BTRC, a substrate recognition subunit of the Skp1/Cullin/F-box protein E3 ubiquitin ligase, induces their ubiquitination and subsequent proteasomal degradation. The alteration of the E3 ligase specificity by Vpu seems to promote the degradation of host IKBKB, leading to NF-kappa-B down-regulation and subsequent apoptosis. Acts as a viroporin that forms an oligomeric ion channel in membranes. Modulates the host DNA repair mechanisms to promote degradation of nuclear viral cDNA in cells that are already productively infected in order to suppress immune sensing and proviral hyper-integration (superinfection). Manipulates PML-NBs and modulates SUMOylation of host BLM protein thereby enhancing its DNA-end processing activity toward viral unintegrated linear DNA. Also inhibits RAD52-mediated homologous repair of viral cDNA, preventing the generation of dead-end circular forms of single copies of the long terminal repeat and permitting sustained nucleolytic attack. The polypeptide is Protein Vpu (Human immunodeficiency virus type 1 group M subtype D (isolate NDK) (HIV-1)).